The following is a 328-amino-acid chain: Leucine carboxyl methyltransferase 1 (328 aa).

S-adenosyl-L-methionine-binding positions include Arg81, Gly105, Asp128, 175–177 (DLN), and Glu201.

The protein belongs to the methyltransferase superfamily. LCMT family.

The catalysed reaction is [phosphatase 2A protein]-C-terminal L-leucine + S-adenosyl-L-methionine = [phosphatase 2A protein]-C-terminal L-leucine methyl ester + S-adenosyl-L-homocysteine. With respect to regulation, inhibited by S-adenosyl-L-homocysteine. In terms of biological role, methylates the carboxyl group of the C-terminal leucine residue of protein phosphatase 2A catalytic subunits to form alpha-leucine ester residues. Acts on the two major protein phosphatase 2A catalytic subunits, PPH21 and PPH22. In Saccharomyces cerevisiae (strain ATCC 204508 / S288c) (Baker's yeast), this protein is Leucine carboxyl methyltransferase 1 (PPM1).